We begin with the raw amino-acid sequence, 1069 residues long: Protocadherin-7 (1069 aa).

The N-terminal stretch at 1–28 is a signal peptide; sequence MLRMRTAGWARGWCLGCCLLLPLSLSLA. 7 Cadherin domains span residues 29 to 143, 144 to 308, 309 to 415, 424 to 535, 536 to 639, 640 to 742, and 745 to 862; these read AAKQ…TPTF, PSPV…SPRF, EKSV…VPSI, PLKD…PPMF, GQSV…DPKF, MQDV…APTV, and PKNI…IPLT. Topologically, residues 29–879 are extracellular; sequence AAKQLLRYRL…SYEISKQRLS (851 aa). Asn79 carries an N-linked (GlcNAc...) asparagine glycan. Residues 182–242 form a disordered region; sequence LLQEPGGGGS…GGTNPGGRSS (61 aa). A compositionally biased stretch (gly residues) spans 207–221; the sequence is PGGGGNGASGGGSGG. N-linked (GlcNAc...) asparagine glycans are attached at residues Asn689, Asn747, Asn780, Asn822, Asn840, and Asn845. Residues 880 to 900 form a helical membrane-spanning segment; it reads IVIGVVAGIMTVILIILIVVM. The Cytoplasmic segment spans residues 901-1069; that stretch reads ARYCRSKNKN…RLHPYITVFG (169 aa). Residues 910–988 form a disordered region; that stretch reads NGYEAGKKDH…RYRSVNGGPG (79 aa). Basic residues predominate over residues 930–944; it reads KSKKPKKDKKNKKSK. Phosphoserine occurs at positions 989 and 1011.

As to expression, expressed predominantly in brain and heart and at lower levels in various other tissues.

It is found in the cell membrane. The protein is Protocadherin-7 (PCDH7) of Homo sapiens (Human).